A 319-amino-acid polypeptide reads, in one-letter code: Molybdenum cofactor biosynthesis bifunctional protein (319 aa).

Residues 1-145 (MIDVGDKAVT…GKSGHWQRPA (145 aa)) are molybdenum cofactor biosynthesis protein C. Residues 61–63 (LCH) and 99–100 (ME) contribute to the substrate site. Residue Asp114 is part of the active site. The interval 146–319 (IAPDVAPTGA…KGADHGTVKG (174 aa)) is molybdenum cofactor biosynthesis protein B.

This sequence in the N-terminal section; belongs to the MoaC family. In the C-terminal section; belongs to the MoaB/Mog family.

The catalysed reaction is (8S)-3',8-cyclo-7,8-dihydroguanosine 5'-triphosphate = cyclic pyranopterin phosphate + diphosphate. Its pathway is cofactor biosynthesis; molybdopterin biosynthesis. In terms of biological role, catalyzes the conversion of (8S)-3',8-cyclo-7,8-dihydroguanosine 5'-triphosphate to cyclic pyranopterin monophosphate (cPMP). The sequence is that of Molybdenum cofactor biosynthesis bifunctional protein (moaCB) from Synechococcus elongatus (strain ATCC 33912 / PCC 7942 / FACHB-805) (Anacystis nidulans R2).